Consider the following 349-residue polypeptide: MISSKLNNNYYNNPFTFNNNSNTISVTQKEALKKTIKEAAVLTDIALVNLNNDGPSLEISALIESKCKQLYEYSTTNTITIYNLLNYNNNNNYNNINRYNNNNSPSNNNNNNNNNNNNNNNNNNNNNSNNNNNNNNINNNNNSNNNNINNNNNNNSENNCNNNFNVNKNLDNDKYNNKSCKNNNINNNNNNNNNSENKEKNNINNNNEKENNEYNNNRSASTSPVIKRSKSLSPILQFDKIDLEEEYTSDYDYSDGSNESSSPTLSASTLSSEDSKPKVLKRGRGRPSKPKPVQCFSCFRSNTPEWRKGKDKDGNVIDLCNACGLSYMKYIKKAKESKDKLSINNLINK.

Low complexity-rich tracts occupy residues 95 to 169 and 177 to 195; these read NINR…VNKN and NKSC…NNNS. Disordered stretches follow at residues 95-227 and 250-294; these read NINR…PVIK and DYDY…KPVQ. A compositionally biased stretch (basic and acidic residues) spans 196-212; the sequence is ENKEKNNINNNNEKENN. The span at 257-272 shows a compositional bias: low complexity; the sequence is SNESSSPTLSASTLSS. Residues 278–289 are compositionally biased toward basic residues; it reads KVLKRGRGRPSK. A GATA-type zinc finger spans residues 295–323; that stretch reads CFSCFRSNTPEWRKGKDKDGNVIDLCNAC.

The sequence is that of GATA zinc finger domain-containing protein 24 (gtaX) from Dictyostelium discoideum (Social amoeba).